A 641-amino-acid polypeptide reads, in one-letter code: Mediator of RNA polymerase II transcription subunit 17 (641 aa).

The stretch at 159-186 (RLQSFNAAADKLLKSAARLETEVASETR) forms a coiled coil.

This sequence belongs to the Mediator complex subunit 17 family. As to quaternary structure, component of the Mediator complex.

Its subcellular location is the nucleus. Component of the Mediator complex, a coactivator involved in the regulated transcription of nearly all RNA polymerase II-dependent genes. Mediator functions as a bridge to convey information from gene-specific regulatory proteins to the basal RNA polymerase II transcription machinery. Mediator is recruited to promoters by direct interactions with regulatory proteins and serves as a scaffold for the assembly of a functional preinitiation complex with RNA polymerase II and the general transcription factors. This chain is Mediator of RNA polymerase II transcription subunit 17 (srb4), found in Aspergillus clavatus (strain ATCC 1007 / CBS 513.65 / DSM 816 / NCTC 3887 / NRRL 1 / QM 1276 / 107).